Here is a 320-residue protein sequence, read N- to C-terminus: Probable L-ascorbate peroxidase 5, chloroplastic (320 aa).

A chloroplast-targeting transit peptide spans 1 to 42 (MAVVHRILRRGLSAASPLPSLRGLLLVSPQELGRRPASSSSS). His-80 (proton acceptor) is an active-site residue. His-209 serves as a coordination point for heme b. A K(+)-binding site is contributed by Thr-210. Positions 213–241 (RARPERSGWGKPETKYTENGPGAPGGQSW) are disordered. Residues 214 to 228 (ARPERSGWGKPETKY) show a composition bias toward basic and acidic residues. K(+)-binding residues include Thr-242 and Asp-249.

It belongs to the peroxidase family. Ascorbate peroxidase subfamily. It depends on heme b as a cofactor. As to expression, expressed in leaves, stems and flowers.

The protein resides in the plastid. It localises to the chloroplast stroma. It carries out the reaction L-ascorbate + H2O2 = L-dehydroascorbate + 2 H2O. Functionally, plays a key role in hydrogen peroxide removal. The protein is Probable L-ascorbate peroxidase 5, chloroplastic of Oryza sativa subsp. japonica (Rice).